Consider the following 304-residue polypeptide: Ribosomal RNA small subunit methyltransferase H (304 aa).

S-adenosyl-L-methionine-binding positions include 37 to 39 (GGH), D57, F79, D100, and H107.

Belongs to the methyltransferase superfamily. RsmH family.

The protein resides in the cytoplasm. It catalyses the reaction cytidine(1402) in 16S rRNA + S-adenosyl-L-methionine = N(4)-methylcytidine(1402) in 16S rRNA + S-adenosyl-L-homocysteine + H(+). In terms of biological role, specifically methylates the N4 position of cytidine in position 1402 (C1402) of 16S rRNA. The protein is Ribosomal RNA small subunit methyltransferase H of Bacteroides fragilis (strain ATCC 25285 / DSM 2151 / CCUG 4856 / JCM 11019 / LMG 10263 / NCTC 9343 / Onslow / VPI 2553 / EN-2).